A 426-amino-acid chain; its full sequence is Bifunctional protein GlmU (426 aa).

Residues 1-216 (MSEVDVVILA…WHDILGVNTQ (216 aa)) form a pyrophosphorylase region. UDP-N-acetyl-alpha-D-glucosamine-binding positions include 9-12 (LAAG), Lys23, and Gln69. Asp97 lines the Mg(2+) pocket. Residues Gly132, Glu148, Asn163, and Asn214 each coordinate UDP-N-acetyl-alpha-D-glucosamine. Asn214 contacts Mg(2+). The linker stretch occupies residues 217 to 237 (QQLAAVSKIARKRINDQIMAN). The N-acetyltransferase stretch occupies residues 238-426 (GVTMIDPLTT…AKHDQRDDQP (189 aa)). Arg286 and Lys304 together coordinate UDP-N-acetyl-alpha-D-glucosamine. Catalysis depends on His316, which acts as the Proton acceptor. The UDP-N-acetyl-alpha-D-glucosamine site is built by Tyr319 and Asn330. Acetyl-CoA is bound by residues Ala333, 339-340 (NY), Ser358, Ala376, and Arg393.

This sequence in the N-terminal section; belongs to the N-acetylglucosamine-1-phosphate uridyltransferase family. The protein in the C-terminal section; belongs to the transferase hexapeptide repeat family. Homotrimer. The cofactor is Mg(2+).

It localises to the cytoplasm. It catalyses the reaction alpha-D-glucosamine 1-phosphate + acetyl-CoA = N-acetyl-alpha-D-glucosamine 1-phosphate + CoA + H(+). The catalysed reaction is N-acetyl-alpha-D-glucosamine 1-phosphate + UTP + H(+) = UDP-N-acetyl-alpha-D-glucosamine + diphosphate. It participates in nucleotide-sugar biosynthesis; UDP-N-acetyl-alpha-D-glucosamine biosynthesis; N-acetyl-alpha-D-glucosamine 1-phosphate from alpha-D-glucosamine 6-phosphate (route II): step 2/2. The protein operates within nucleotide-sugar biosynthesis; UDP-N-acetyl-alpha-D-glucosamine biosynthesis; UDP-N-acetyl-alpha-D-glucosamine from N-acetyl-alpha-D-glucosamine 1-phosphate: step 1/1. It functions in the pathway bacterial outer membrane biogenesis; LPS lipid A biosynthesis. Catalyzes the last two sequential reactions in the de novo biosynthetic pathway for UDP-N-acetylglucosamine (UDP-GlcNAc). The C-terminal domain catalyzes the transfer of acetyl group from acetyl coenzyme A to glucosamine-1-phosphate (GlcN-1-P) to produce N-acetylglucosamine-1-phosphate (GlcNAc-1-P), which is converted into UDP-GlcNAc by the transfer of uridine 5-monophosphate (from uridine 5-triphosphate), a reaction catalyzed by the N-terminal domain. The protein is Bifunctional protein GlmU of Oenococcus oeni (strain ATCC BAA-331 / PSU-1).